The following is a 30-amino-acid chain: uncharacterized protein (30 aa).

Residues 1–30 (MHLSTLPNVPWPNRSFTTKRPPLPNMSFSW) form a disordered region.

This is an uncharacterized protein from Saccharomyces cerevisiae (strain ATCC 204508 / S288c) (Baker's yeast).